A 193-amino-acid polypeptide reads, in one-letter code: Ribonuclease HII (193 aa).

In terms of domain architecture, RNase H type-2 spans 15 to 193; sequence CIVAGIDEAG…PYHRRSFRCC (179 aa). A divalent metal cation contacts are provided by aspartate 21, glutamate 22, and aspartate 112.

Belongs to the RNase HII family. It depends on Mn(2+) as a cofactor. The cofactor is Mg(2+).

The protein localises to the cytoplasm. It carries out the reaction Endonucleolytic cleavage to 5'-phosphomonoester.. Functionally, endonuclease that specifically degrades the RNA of RNA-DNA hybrids. This is Ribonuclease HII from Rickettsia africae (strain ESF-5).